The primary structure comprises 471 residues: Lincomycin resistance protein LmrB (471 aa).

The next 12 helical transmembrane spans lie at 13 to 35, 55 to 77, 84 to 106, 111 to 133, 140 to 162, 167 to 189, 201 to 223, 227 to 249, 269 to 291, 329 to 351, 358 to 380, and 445 to 467; these read PIPI…TALN, LTTG…LQWF, FTAV…FAML, VVQA…LIFP, AMGM…SGLI, TWNW…GMKF, IDIL…FSSA, GWGS…LFVW, FTLG…ILLP, AYGP…FFLT, SALT…MMPA, and GIQN…SLFI.

Belongs to the major facilitator superfamily. EmrB family.

The protein localises to the cell membrane. Proton-dependent transporter. May mediate the efflux of lincomycin. The polypeptide is Lincomycin resistance protein LmrB (lmrB) (Listeria monocytogenes serovar 1/2a (strain ATCC BAA-679 / EGD-e)).